Consider the following 491-residue polypeptide: Ran-binding protein 3-like (491 aa).

One can recognise a RanBD1 domain in the interval 270–441; it reads TFKSVLKFPN…VALRSLAKQG (172 aa). The tract at residues 440 to 468 is disordered; sequence QGDGGPAESQSDTALPQLNGESCDEDEDE. The segment covering 447 to 459 has biased composition (polar residues); the sequence is ESQSDTALPQLNG.

Interacts with SMAD1, SMAD5 and SMAD8.

It is found in the nucleus. The protein localises to the cytoplasm. Nuclear export factor for BMP-specific SMAD1/5/8 that plays a critical role in terminating BMP signaling and regulating mesenchymal stem cell differentiation by blocking osteoblast differentiation to promote myogenic differention. Directly recognizes dephosphorylated SMAD1/5/8 and mediates their nuclear export in a Ran-dependent manner. This is Ran-binding protein 3-like (Ranbp3l) from Mus musculus (Mouse).